A 663-amino-acid chain; its full sequence is DNA topoisomerase 4 subunit B (663 aa).

ATP contacts are provided by residues Tyr7, Asn47, Asp74, 114 to 120 (GLHGVGA), and Lys341. A disordered region spans residues 386 to 416 (REAARKAREDARSGKKNKRKDTLLSGKLTPA). Over residues 387 to 398 (EAARKAREDARS) the composition is skewed to basic and acidic residues. The Toprim domain occupies 424-538 (NELYLVEGDS…AGRVFIALPP (115 aa)). Positions 430, 503, and 505 each coordinate Mg(2+).

The protein belongs to the type II topoisomerase family. ParE type 2 subfamily. Heterotetramer composed of ParC and ParE. The cofactor is Mg(2+). Mn(2+) serves as cofactor. Ca(2+) is required as a cofactor.

The enzyme catalyses ATP-dependent breakage, passage and rejoining of double-stranded DNA.. Its function is as follows. Topoisomerase IV is essential for chromosome segregation. It relaxes supercoiled DNA. Performs the decatenation events required during the replication of a circular DNA molecule. In Staphylococcus aureus (strain Mu50 / ATCC 700699), this protein is DNA topoisomerase 4 subunit B.